Consider the following 275-residue polypeptide: 2,3,4,5-tetrahydropyridine-2,6-dicarboxylate N-succinyltransferase (275 aa).

R106 and D143 together coordinate substrate.

The protein belongs to the transferase hexapeptide repeat family. Homotrimer.

The protein resides in the cytoplasm. It carries out the reaction (S)-2,3,4,5-tetrahydrodipicolinate + succinyl-CoA + H2O = (S)-2-succinylamino-6-oxoheptanedioate + CoA. It participates in amino-acid biosynthesis; L-lysine biosynthesis via DAP pathway; LL-2,6-diaminopimelate from (S)-tetrahydrodipicolinate (succinylase route): step 1/3. This is 2,3,4,5-tetrahydropyridine-2,6-dicarboxylate N-succinyltransferase from Pelagibacter ubique (strain HTCC1062).